The primary structure comprises 275 residues: Elongation factor Ts (275 aa).

The segment at 76–79 is involved in Mg(2+) ion dislocation from EF-Tu; sequence TDFV.

It belongs to the EF-Ts family.

The protein resides in the cytoplasm. Associates with the EF-Tu.GDP complex and induces the exchange of GDP to GTP. It remains bound to the aminoacyl-tRNA.EF-Tu.GTP complex up to the GTP hydrolysis stage on the ribosome. The protein is Elongation factor Ts of Corynebacterium kroppenstedtii (strain DSM 44385 / JCM 11950 / CIP 105744 / CCUG 35717).